The following is a 227-amino-acid chain: tRNA (guanine-N(1)-)-methyltransferase (227 aa).

S-adenosyl-L-methionine-binding positions include glycine 111 and 135–140 (LGDYVL).

It belongs to the RNA methyltransferase TrmD family. As to quaternary structure, homodimer.

It localises to the cytoplasm. It carries out the reaction guanosine(37) in tRNA + S-adenosyl-L-methionine = N(1)-methylguanosine(37) in tRNA + S-adenosyl-L-homocysteine + H(+). Its function is as follows. Specifically methylates guanosine-37 in various tRNAs. This Leifsonia xyli subsp. xyli (strain CTCB07) protein is tRNA (guanine-N(1)-)-methyltransferase.